A 189-amino-acid chain; its full sequence is MKLKSVLYLLMLLNCLGLKSAHAATLVHGISTSWHSFSNSVSQTWNEPQTFDLYMPALTWHNRWTYDADKIDRYNERPWGAGGGMSRYDEKGNWNGIYLMAFKDSFNKWEPIGGYGWEKTWRPLNDPDFHFGLGYTAGVTMRDNWNYIPIPLLLPLASIGYGAANFQMTYIPGTYNNGNVYFAWLRWQF.

A signal peptide spans Met-1 to Ala-23. Residues His-61, Asp-104, and Ser-105 contribute to the active site.

This sequence belongs to the lipid A palmitoyltransferase family. In terms of assembly, homodimer.

It localises to the cell outer membrane. It carries out the reaction a lipid A + a 1,2-diacyl-sn-glycero-3-phosphocholine = a hepta-acyl lipid A + a 2-acyl-sn-glycero-3-phosphocholine. It catalyses the reaction a lipid IVA + a 1,2-diacyl-sn-glycero-3-phosphocholine = a lipid IVB + a 2-acyl-sn-glycero-3-phosphocholine. The catalysed reaction is a lipid IIA + a 1,2-diacyl-sn-glycero-3-phosphocholine = a lipid IIB + a 2-acyl-sn-glycero-3-phosphocholine. In terms of biological role, transfers a fatty acid residue from the sn-1 position of a phospholipid to the N-linked hydroxyfatty acid chain on the proximal unit of lipid A or its precursors. This is Lipid A acyltransferase PagP from Erwinia amylovora (strain ATCC 49946 / CCPPB 0273 / Ea273 / 27-3).